Here is a 197-residue protein sequence, read N- to C-terminus: MTIAAGTDDNRQRSTWIWLIACLGVVAIQILTQHLMGRLWICECGYVKLWEGVVNSSGNSQHISDWYTPSHIIHGFLFYGLGYLLLRGKPLSVRLLLATLIESAWEIAENTPMVINRYRSATISLDYFGDSILNSTMDTLAMAAGFLLASRLPVAVTVTIAIVLELFTGWIIRDNLTLNVLMLVWPLDAVKAWQAGL.

3 helical membrane passes run 16 to 36 (WIWLIACLGVVAIQILTQHLM), 66 to 86 (WYTPSHIIHGFLFYGLGYLLL), and 152 to 172 (LPVAVTVTIAIVLELFTGWII).

Belongs to the UPF0314 family.

It is found in the cell membrane. The protein is UPF0314 protein NGR_c32320 of Sinorhizobium fredii (strain NBRC 101917 / NGR234).